A 378-amino-acid polypeptide reads, in one-letter code: Erythronate-4-phosphate dehydrogenase (378 aa).

The substrate site is built by serine 45 and threonine 66. 2 residues coordinate NAD(+): aspartate 146 and threonine 175. Residue arginine 208 is part of the active site. Aspartate 232 is a binding site for NAD(+). The active site involves glutamate 237. Histidine 254 functions as the Proton donor in the catalytic mechanism. Glycine 257 contributes to the NAD(+) binding site. Residue tyrosine 258 participates in substrate binding.

This sequence belongs to the D-isomer specific 2-hydroxyacid dehydrogenase family. PdxB subfamily. In terms of assembly, homodimer.

It is found in the cytoplasm. The enzyme catalyses 4-phospho-D-erythronate + NAD(+) = (R)-3-hydroxy-2-oxo-4-phosphooxybutanoate + NADH + H(+). It participates in cofactor biosynthesis; pyridoxine 5'-phosphate biosynthesis; pyridoxine 5'-phosphate from D-erythrose 4-phosphate: step 2/5. In terms of biological role, catalyzes the oxidation of erythronate-4-phosphate to 3-hydroxy-2-oxo-4-phosphonooxybutanoate. The polypeptide is Erythronate-4-phosphate dehydrogenase (Escherichia coli O8 (strain IAI1)).